Reading from the N-terminus, the 2280-residue chain is Protein Ycf2 (2280 aa).

1631-1638 (GSIGTGRS) contacts ATP.

Belongs to the Ycf2 family.

It is found in the plastid. Its subcellular location is the chloroplast stroma. Its function is as follows. Probable ATPase of unknown function. Its presence in a non-photosynthetic plant (Epifagus virginiana) and experiments in tobacco indicate that it has an essential function which is probably not related to photosynthesis. This Nicotiana tomentosiformis (Tobacco) protein is Protein Ycf2.